A 524-amino-acid chain; its full sequence is Putative UDP-glucuronosyltransferase ugt-56 (524 aa).

Positions 1 to 20 are cleaved as a signal peptide; that stretch reads MLWAFIVWLGALCIYGSAFD. N-linked (GlcNAc...) asparagine glycosylation is found at asparagine 125, asparagine 277, and asparagine 335. A helical membrane pass occupies residues 488 to 508; it reads LIDSSIALVFMLFIFVFVNHF.

The protein belongs to the UDP-glycosyltransferase family.

The protein resides in the membrane. The catalysed reaction is glucuronate acceptor + UDP-alpha-D-glucuronate = acceptor beta-D-glucuronoside + UDP + H(+). This Caenorhabditis elegans protein is Putative UDP-glucuronosyltransferase ugt-56 (ugt-56).